A 280-amino-acid polypeptide reads, in one-letter code: Chemotaxis protein methyltransferase 2 (280 aa).

A CheR-type methyltransferase domain is found at 10 to 280 (FGNQEFHYTR…SVGQTVYSPA (271 aa)). Residues asparagine 85, threonine 87, arginine 91, glutamate 125, aspartate 150, 208-209 (NL), and 226-227 (RN) each bind S-adenosyl-L-methionine.

As to quaternary structure, interacts with the C-terminal pentapeptide GWEEF of the methyl-accepting chemotaxis protein McpB.

It catalyses the reaction L-glutamyl-[protein] + S-adenosyl-L-methionine = [protein]-L-glutamate 5-O-methyl ester + S-adenosyl-L-homocysteine. Functionally, methylation of the methyl-accepting chemotaxis proteins (MCP) to form gamma-glutamyl methyl ester residues in MCP. It specifically targets the McpB chemoreceptor. This Pseudomonas aeruginosa (strain ATCC 15692 / DSM 22644 / CIP 104116 / JCM 14847 / LMG 12228 / 1C / PRS 101 / PAO1) protein is Chemotaxis protein methyltransferase 2.